We begin with the raw amino-acid sequence, 207 residues long: MSVTIDHTTENAAPAQAPVSDRAWALFRALDGKGLVPDGYVEGWKKTFEEDFSPRRGAELVARAWTDPEFRQLLLTDGTAAVAQYGYLGPQGEYIVAVEDTPTLKNVIVCSLCSCTAWPILGLPPTWYKSFEYRARVVREPRKVLSEMGTEIASDIEIRVYDTTAETRYMVLPQRPAGTEGWSQEQLQEIVTKDCLIGVAIPQVPTV.

Residues C110, C113, S114, and C115 each coordinate Fe(3+). C113 carries the post-translational modification Cysteine sulfinic acid (-SO2H). A Cysteine sulfenic acid (-SOH) modification is found at C115.

This sequence belongs to the nitrile hydratase subunit alpha family. In terms of assembly, heterodimer of an alpha and a beta chain. The cofactor is Fe(3+). Oxidation on Cys-113 is essential for the activity. In terms of processing, oxidation on Cys-115 stabilizes the Fe-NO ligand coordinated in the inactive form.

It catalyses the reaction an aliphatic primary amide = an aliphatic nitrile + H2O. Its activity is regulated as follows. Inactivated by nitrosylation of the iron center in the dark and activated by photo-induced nitric oxide (NO) release. Inactivated by oxidation of Cys-115 to a sulfenic acid. NHase catalyzes the hydration of various nitrile compounds to the corresponding amides. Industrial production of acrylamide is now being developed using some of the enzymes of this class. The polypeptide is Nitrile hydratase subunit alpha (nthA) (Rhodococcus erythropolis (Arthrobacter picolinophilus)).